We begin with the raw amino-acid sequence, 229 residues long: DNA mismatch repair protein MutH (229 aa).

Belongs to the MutH family.

It is found in the cytoplasm. Sequence-specific endonuclease that cleaves unmethylated GATC sequences. It is involved in DNA mismatch repair. The chain is DNA mismatch repair protein MutH from Escherichia coli O6:K15:H31 (strain 536 / UPEC).